Consider the following 484-residue polypeptide: Protein LAZ1 homolog 1 (484 aa).

The first 19 residues, 1 to 19, serve as a signal peptide directing secretion; the sequence is MEWRGILCSLLFIVSVGES. 6 consecutive transmembrane segments (helical) span residues 42–62, 76–96, 190–210, 219–239, 264–284, and 299–319; these read PILS…YLIF, FLIG…LSLV, MILK…GVYG, GYPY…YCLV, IVFL…MGLV, and YIIC…FPAA. A disordered region spans residues 344–364; that stretch reads PDPEEVKDSERTTRTRYGRHD. A compositionally biased stretch (basic and acidic residues) spans 347 to 364; the sequence is EEVKDSERTTRTRYGRHD. A coiled-coil region spans residues 406–428; it reads IAKINRTFHQISENVKRFEQQKK. The disordered stretch occupies residues 459–484; that stretch reads VSDSGLGSTNRHHQSRVSGLWTRMRR.

This sequence belongs to the TMEM184 family.

The protein resides in the membrane. The polypeptide is Protein LAZ1 homolog 1 (Arabidopsis thaliana (Mouse-ear cress)).